The sequence spans 661 residues: Protein WHI3 (661 aa).

A compositionally biased stretch (low complexity) spans 14-31 (ASSSDNVVSSTTNTHNIS). The segment at 14–58 (ASSSDNVVSSTTNTHNISPSHRSSLNLNTTSHPHEASGRGSASGE) is disordered. Over residues 32–44 (PSHRSSLNLNTTS) the composition is skewed to polar residues. The residue at position 231 (Ser231) is a Phosphoserine. Composition is skewed to low complexity over residues 237–272 (DPFSNDSPLSQQQSQQQQQQPQQPQQHSTQKHSPQQ), 383–409 (NTSANANASSNNGASNNGANQALSASS), and 496–508 (KNNSTTSLSSNIT). Disordered regions lie at residues 237-280 (DPFS…QVNS), 383-410 (NTSANANASSNNGASNNGANQALSASSQ), 469-508 (EHMYPVNQSNTPQKVPPARLSSSRNSHKNNSTTSLSSNIT), and 613-661 (SSKG…HIKN). Residues 538–625 (NTLYVGNLPS…GGIRLSFSKN (88 aa)) form the RRM domain. The span at 628–647 (GVRGPNSRRGGSGNPNPNVN) shows a compositional bias: low complexity. Residues 648–661 (MLSSYNSNVGHIKN) show a composition bias toward polar residues.

Its function is as follows. Involved in size control and cell cycle. The polypeptide is Protein WHI3 (WHI3) (Saccharomyces cerevisiae (strain ATCC 204508 / S288c) (Baker's yeast)).